The chain runs to 403 residues: Microtubule-associated protein tau (403 aa).

A compositionally biased stretch (basic and acidic residues) spans 1 to 32; sequence MAEPRQEFDVMEDHAQGDYTLQDHEGDMEPGL. The tract at residues 1–219 is disordered; sequence MAEPRQEFDV…GPMPDLKNVK (219 aa). Residue Ala2 is modified to N-acetylalanine. Tyr19 carries the phosphotyrosine modification. Lys33 is covalently cross-linked (Glycyl lysine isopeptide (Lys-Gly) (interchain with G-Cter in ubiquitin)). Residues Ser35 and Ser50 each carry the phosphoserine modification. Residues 50-60 show a composition bias toward polar residues; that stretch reads SETSDAKSTPT. 3 positions are modified to phosphothreonine: Thr58, Thr60, and Thr71. The span at 90 to 106 shows a compositional bias: basic and acidic residues; it reads KGKDGTGPDDKKAKGAD. Thr115 bears the Phosphothreonine mark. Arg117 is subject to Omega-N-methylarginine. Lys125 carries the N6,N6-dimethyllysine; alternate modification. Lys125 carries the post-translational modification N6-acetyllysine; alternate. Phosphothreonine occurs at positions 131, 137, 138, and 143. Over residues 136-147 the composition is skewed to low complexity; sequence KTTPTPKTSPGT. 2 positions are modified to phosphoserine: Ser153 and Ser157. Residues 156–176 are compositionally biased toward low complexity; sequence RSGYSSPGSPGTPGSRSRTPS. Tyr159 is subject to Phosphotyrosine. Residues Ser160, Ser161, and Ser164 each carry the phosphoserine modification. A phosphothreonine mark is found at Thr167 and Thr174. Ser176 is modified (phosphoserine). Phosphothreonine is present on Thr179. Lys187 bears the N6-acetyllysine mark. Thr193 carries the phosphothreonine modification. Residues Ser197 and Ser199 each carry the phosphoserine modification. Tau/MAP repeat units follow at residues 206–236, 237–267, 268–298, and 299–330; these read QAAP…GGGK, VQII…GGGS, VQIV…GGGQ, and VEVK…GGGN. Lys216 participates in a covalent cross-link: Glycyl lysine isopeptide (Lys-Gly) (interchain with G-Cter in ubiquitin). Lys221 is subject to N6-acetyllysine; alternate. Position 221 is an N6-methyllysine; alternate (Lys221). Lys221 is covalently cross-linked (Glycyl lysine isopeptide (Lys-Gly) (interchain with G-Cter in ubiquitin); alternate). Ser224 carries the phosphoserine modification. A Glycyl lysine isopeptide (Lys-Gly) (interchain with G-Cter in ubiquitin) cross-link involves residue Lys229. Lys243 is subject to N6-acetyllysine; alternate. Residue Lys243 forms a Glycyl lysine isopeptide (Lys-Gly) (interchain with G-Cter in ubiquitin); alternate linkage. 2 positions are modified to phosphoserine: Ser247 and Ser251. An N6-acetyllysine modification is found at Lys252. Cys253 and Cys284 are disulfide-bonded. Ser255 is subject to Phosphoserine. N6-acetyllysine; alternate is present on Lys260. Residue Lys260 forms a Glycyl lysine isopeptide (Lys-Gly) (interchain with G-Cter in ubiquitin); alternate linkage. Ser267 is subject to Phosphoserine. The residue at position 273 (Lys273) is an N6,N6-dimethyllysine; alternate. Residues Lys273, Lys279, and Lys283 each carry the N6-acetyllysine; alternate modification. Residues Lys273, Lys279, and Lys283 each participate in a glycyl lysine isopeptide (Lys-Gly) (interchain with G-Cter in ubiquitin); alternate cross-link. Ser286 carries the phosphoserine modification. 3 positions are modified to N6-acetyllysine; alternate: Lys293, Lys305, and Lys309. Residues Lys293, Lys305, and Lys309 each participate in a glycyl lysine isopeptide (Lys-Gly) (interchain with G-Cter in ubiquitin); alternate cross-link. Arg311 carries the post-translational modification Omega-N-methylarginine. Ser314 is modified (phosphoserine). Residue Lys315 forms a Glycyl lysine isopeptide (Lys-Gly) (interchain with G-Cter in ubiquitin) linkage. The residue at position 318 (Ser318) is a Phosphoserine. Lys331 carries the post-translational modification N6-acetyllysine; alternate. A Glycyl lysine isopeptide (Lys-Gly) (interchain with G-Cter in ubiquitin); alternate cross-link involves residue Lys331. Residue Lys337 forms a Glycyl lysine isopeptide (Lys-Gly) (interchain with G-Cter in ubiquitin) linkage. Lys347 is modified (N6-acetyllysine; alternate). Residue Lys347 forms a Glycyl lysine isopeptide (Lys-Gly) (interchain with G-Cter in ubiquitin); alternate linkage. Tyr356 carries the post-translational modification Phosphotyrosine. Phosphoserine is present on residues Ser358 and Ser362. Residues 360–379 are disordered; that stretch reads VVSGDTSPRHLSNVSSTGSI. A compositionally biased stretch (polar residues) spans 363-378; that stretch reads GDTSPRHLSNVSSTGS. Residue Thr365 is modified to Phosphothreonine. A phosphoserine mark is found at Ser366, Ser371, Ser378, and Ser384. Phosphothreonine is present on Thr389.

In terms of assembly, interacts with MARK1, MARK2, MARK3 and MARK4. Interacts with SQSTM1 when polyubiquitinated. Interacts with PSMC2 through SQSTM1. Interacts with FKBP4. Binds to CSNK1D. Interacts with SGK1. Interacts with PIN1. Interacts with LRRK2. Interacts with LRP1, leading to endocytosis; this interaction is reduced in the presence of LRPAP1/RAP. Polyubiquitinated. Requires functional TRAF6 and may provoke SQSTM1-dependent degradation by the proteasome. Post-translationally, phosphorylation at various serine and threonine residues in S-P or T-P motifs by proline-directed protein kinases (PDPK1, CDK1, CDK5, GSK3, MAPK) (a few sites per protein in interphase, more in mitosis), and at serine residues in K-X-G-S motifs by MAP/microtubule affinity-regulating kinase (MARK1, MARK2, MARK3, MARK4), causing detachment from microtubules, and their disassembly. Phosphorylation at Ser-224 by BRSK1 and BRSK2 in neurons affects ability to bind microtubules and plays a role in neuron polarization. Phosphorylated by PHK. Dephosphorylation at several serine and threonine residues by the serine/threonine phosphatase PPP5C. In terms of tissue distribution, expressed in neurons.

The protein resides in the cytoplasm. Its subcellular location is the cytosol. The protein localises to the cell membrane. It localises to the cytoskeleton. It is found in the cell projection. The protein resides in the axon. Its subcellular location is the dendrite. Functionally, promotes microtubule assembly and stability, and might be involved in the establishment and maintenance of neuronal polarity. The C-terminus binds axonal microtubules while the N-terminus binds neural plasma membrane components, suggesting that tau functions as a linker protein between both. Axonal polarity is predetermined by tau localization (in the neuronal cell) in the domain of the cell body defined by the centrosome. The short isoforms allow plasticity of the cytoskeleton whereas the longer isoforms may preferentially play a role in its stabilization. The protein is Microtubule-associated protein tau (MAPT) of Capra hircus (Goat).